Here is a 346-residue protein sequence, read N- to C-terminus: Eukaryotic translation initiation factor 3 subunit I (346 aa).

5 WD repeats span residues 8-49 (GHER…GTYH), 50-91 (GHQG…KTWD), 145-184 (CEDS…LLYN), 189-228 (ELNQ…VLKT), and 286-325 (GHFG…FDFM).

It belongs to the eIF-3 subunit I family. As to quaternary structure, component of the eukaryotic translation initiation factor 3 (eIF-3) complex.

Its subcellular location is the cytoplasm. Its function is as follows. Component of the eukaryotic translation initiation factor 3 (eIF-3) complex, which is involved in protein synthesis of a specialized repertoire of mRNAs and, together with other initiation factors, stimulates binding of mRNA and methionyl-tRNAi to the 40S ribosome. The eIF-3 complex specifically targets and initiates translation of a subset of mRNAs involved in cell proliferation. The sequence is that of Eukaryotic translation initiation factor 3 subunit I (tif-34) from Neurospora crassa (strain ATCC 24698 / 74-OR23-1A / CBS 708.71 / DSM 1257 / FGSC 987).